The chain runs to 154 residues: uncharacterized protein (154 aa).

The signal sequence occupies residues 1-19 (MWSLKSTLCIALLVTYSVA). ShKT domains are found at residues 67-102 (CADD…CGFC) and 113-150 (CVDS…CKLC). 6 disulfides stabilise this stretch: C67/C102, C75/C95, C82/C99, C113/C150, C120/C143, and C129/C147.

This is an uncharacterized protein from Caenorhabditis elegans.